Here is a 722-residue protein sequence, read N- to C-terminus: Polyribonucleotide nucleotidyltransferase (722 aa).

Mg(2+) is bound by residues Asp487 and Asp493. Positions 554 to 613 (PRMVSFKIHPDKIREVIGKGGATIQALTKETGCSIDIKDDGTVTIASTSAEGMAEAKARI) constitute a KH domain. The S1 motif domain maps to 623–691 (GKIYEGPVVK…ERGRLRLSLK (69 aa)).

It belongs to the polyribonucleotide nucleotidyltransferase family. Mg(2+) serves as cofactor.

Its subcellular location is the cytoplasm. The catalysed reaction is RNA(n+1) + phosphate = RNA(n) + a ribonucleoside 5'-diphosphate. In terms of biological role, involved in mRNA degradation. Catalyzes the phosphorolysis of single-stranded polyribonucleotides processively in the 3'- to 5'-direction. The chain is Polyribonucleotide nucleotidyltransferase from Polynucleobacter necessarius subsp. necessarius (strain STIR1).